The sequence spans 129 residues: UPF0102 protein RD1_1191 (129 aa).

It belongs to the UPF0102 family.

The protein is UPF0102 protein RD1_1191 of Roseobacter denitrificans (strain ATCC 33942 / OCh 114) (Erythrobacter sp. (strain OCh 114)).